The sequence spans 124 residues: MATTPLPNALSAYRLLLRATRIAFQGDFTTLHAARAEARKHFDQNRRLGVDTPKHIQHAVETAEILRTNVVQGVRVEGSGEAGKEEQRYELRIHEHIERGDNDTIKTAGNKGIKAAVGKTCSQS.

Belongs to the complex I LYR family. MZM1 subfamily. In terms of assembly, interacts with RIP1.

It is found in the mitochondrion matrix. In terms of biological role, assembly factor required for Rieske Fe-S protein RIP1 incorporation into the cytochrome b-c1 (CIII) complex. Functions as a chaperone, binding to this subunit within the mitochondrial matrix and stabilizing it prior to its translocation and insertion into the late CIII dimeric intermediate within the mitochondrial inner membrane. Modulates the mitochondrial matrix zinc pool. The protein is Mitochondrial zinc maintenance protein 1, mitochondrial (MZM1) of Paracoccidioides brasiliensis (strain Pb18).